Here is a 391-residue protein sequence, read N- to C-terminus: RNA-binding motif protein, X chromosome (391 aa).

N-acetylmethionine; in Heterogeneous nuclear ribonucleoprotein G; alternate is present on M1. The residue at position 2 (V2) is an N-acetylvaline; in Heterogeneous nuclear ribonucleoprotein G, N-terminally processed. Residues G8–K86 form the RRM domain. K22 participates in a covalent cross-link: Glycyl lysine isopeptide (Lys-Gly) (interchain with G-Cter in SUMO2). At K30 the chain carries N6-acetyllysine. Residues D61 to K80 are compositionally biased toward basic and acidic residues. Residues D61 to Y391 are disordered. Glycyl lysine isopeptide (Lys-Gly) (interchain with G-Cter in SUMO2) cross-links involve residues K80 and K86. Phosphoserine occurs at positions 88 and 91. Residues L109–R120 show a composition bias toward gly residues. 3 positions are modified to omega-N-methylarginine: R125, R144, and R164. The span at R151 to R164 shows a compositional bias: pro residues. At S165 the chain carries Phosphoserine. An Omega-N-methylarginine modification is found at R172. S174 is subject to Phosphoserine. The tract at residues G186–P236 is necessary for the association to nascent RNAPII transcripts and nuclear localization. Basic and acidic residues-rich tracts occupy residues P194–S215 and Y241–D274. 5 positions are modified to phosphoserine: S261, S328, S329, S330, and S332. Residues S323–S337 show a composition bias toward low complexity. Positions D333–Y391 are necessary for RNA-binding. Over residues G338 to R347 the composition is skewed to basic and acidic residues. The residue at position 352 (S352) is a Phosphoserine. Over residues D362–A371 the composition is skewed to low complexity. The span at S380–Y391 shows a compositional bias: basic and acidic residues.

Homomultimer. Found in the supraspliceosome complex. Identified in the spliceosome C complex. Forms a complex with ILF2, ILF3, YLPM1, KHDRBS1, NCOA5 and PPP1CA. Interacts with CLK2, KHDRBS2, KHDRBS3, SAFB/SAFB1, TRA2B and YTHDC1. Interacts with ERAP1; the interaction is RNA-independent. Interacts with PPIA/CYPA. In terms of processing, O-glycosylated. Post-translationally, arg-185 is dimethylated, probably to asymmetric dimethylarginine.

It localises to the nucleus. Its function is as follows. RNA-binding protein that plays several role in the regulation of pre- and post-transcriptional processes. Implicated in tissue-specific regulation of gene transcription and alternative splicing of several pre-mRNAs. Binds to and stimulates transcription from the tumor suppressor TXNIP gene promoter; may thus be involved in tumor suppression. When associated with SAFB, binds to and stimulates transcription from the SREBF1 promoter. Associates with nascent mRNAs transcribed by RNA polymerase II. Component of the supraspliceosome complex that regulates pre-mRNA alternative splice site selection. Can either activate or suppress exon inclusion; acts additively with TRA2B to promote exon 7 inclusion of the survival motor neuron SMN. Represses the splicing of MAPT/Tau exon 10. Binds preferentially to single-stranded 5'-CC[A/C]-rich RNA sequence motifs localized in a single-stranded conformation; probably binds RNA as a homodimer. Binds non-specifically to pre-mRNAs. Also plays a role in the cytoplasmic TNFR1 trafficking pathways; promotes both the IL-1-beta-mediated inducible proteolytic cleavage of TNFR1 ectodomains and the release of TNFR1 exosome-like vesicles to the extracellular compartment. This is RNA-binding motif protein, X chromosome (RBMX) from Macaca fascicularis (Crab-eating macaque).